A 399-amino-acid chain; its full sequence is Phosphate acyltransferase (399 aa).

The protein belongs to the PlsX family. Homodimer. Probably interacts with PlsY.

Its subcellular location is the cytoplasm. It catalyses the reaction a fatty acyl-[ACP] + phosphate = an acyl phosphate + holo-[ACP]. Its pathway is lipid metabolism; phospholipid metabolism. Its function is as follows. Catalyzes the reversible formation of acyl-phosphate (acyl-PO(4)) from acyl-[acyl-carrier-protein] (acyl-ACP). This enzyme utilizes acyl-ACP as fatty acyl donor, but not acyl-CoA. This chain is Phosphate acyltransferase, found in Rhodobacter capsulatus (Rhodopseudomonas capsulata).